The primary structure comprises 285 residues: Polyamine aminopropyltransferase (285 aa).

Residues 2-237 (QMWFSQYHTV…GYWLFGFASK (236 aa)) form the PABS domain. Gln-31 is an S-methyl-5'-thioadenosine binding site. Asp-86 lines the spermidine pocket. S-methyl-5'-thioadenosine-binding positions include Glu-106 and 137–138 (DG). The active-site Proton acceptor is Asp-155. 155–158 (DSTD) contributes to the spermidine binding site.

It belongs to the spermidine/spermine synthase family. Homodimer or homotetramer.

Its subcellular location is the cytoplasm. It carries out the reaction S-adenosyl 3-(methylsulfanyl)propylamine + putrescine = S-methyl-5'-thioadenosine + spermidine + H(+). The protein operates within amine and polyamine biosynthesis; spermidine biosynthesis; spermidine from putrescine: step 1/1. Catalyzes the irreversible transfer of a propylamine group from the amino donor S-adenosylmethioninamine (decarboxy-AdoMet) to putrescine (1,4-diaminobutane) to yield spermidine. The sequence is that of Polyamine aminopropyltransferase from Agathobacter rectalis (strain ATCC 33656 / DSM 3377 / JCM 17463 / KCTC 5835 / VPI 0990) (Eubacterium rectale).